The following is a 372-amino-acid chain: Alanine racemase (372 aa).

Lysine 33 serves as the catalytic Proton acceptor; specific for D-alanine. Residue lysine 33 is modified to N6-(pyridoxal phosphate)lysine. Position 131 (arginine 131) interacts with substrate. Tyrosine 261 serves as the catalytic Proton acceptor; specific for L-alanine. Methionine 309 lines the substrate pocket.

It belongs to the alanine racemase family. Requires pyridoxal 5'-phosphate as cofactor.

The enzyme catalyses L-alanine = D-alanine. Its pathway is amino-acid biosynthesis; D-alanine biosynthesis; D-alanine from L-alanine: step 1/1. Catalyzes the interconversion of L-alanine and D-alanine. May also act on other amino acids. The polypeptide is Alanine racemase (alr) (Salinispora tropica (strain ATCC BAA-916 / DSM 44818 / JCM 13857 / NBRC 105044 / CNB-440)).